Here is a 342-residue protein sequence, read N- to C-terminus: tRNA N6-adenosine threonylcarbamoyltransferase (342 aa).

The Fe cation site is built by H114 and H118. Substrate-binding positions include 136-140 (LVSGG), D169, G182, D186, and N275. D301 provides a ligand contact to Fe cation.

The protein belongs to the KAE1 / TsaD family. Fe(2+) serves as cofactor.

The protein localises to the cytoplasm. The catalysed reaction is L-threonylcarbamoyladenylate + adenosine(37) in tRNA = N(6)-L-threonylcarbamoyladenosine(37) in tRNA + AMP + H(+). Required for the formation of a threonylcarbamoyl group on adenosine at position 37 (t(6)A37) in tRNAs that read codons beginning with adenine. Is involved in the transfer of the threonylcarbamoyl moiety of threonylcarbamoyl-AMP (TC-AMP) to the N6 group of A37, together with TsaE and TsaB. TsaD likely plays a direct catalytic role in this reaction. In Streptococcus pyogenes serotype M4 (strain MGAS10750), this protein is tRNA N6-adenosine threonylcarbamoyltransferase.